Reading from the N-terminus, the 250-residue chain is Probable transcriptional regulatory protein Rxyl_1318 (250 aa).

It belongs to the TACO1 family.

The protein localises to the cytoplasm. This chain is Probable transcriptional regulatory protein Rxyl_1318, found in Rubrobacter xylanophilus (strain DSM 9941 / JCM 11954 / NBRC 16129 / PRD-1).